An 803-amino-acid chain; its full sequence is MWIQVRTIDGSQTRTIEDVSRKATIEELRERVWALFDVRPECQRLFYRGKQLENGYTLFDYDVGLNDIIQLLVRPDSSLPSTSKQNDAQVKPSSHNPPKVKKTARGGSSSQPSTSARTCLIDPGFGLYKVNELVDARDVGLGAWFEAHIHSVTRASDGHSRGKTPLKNGSSYKRTNGNVNHNSKENTNKLDNVPSTSNSDSVAADEDVIYHIEYDEYPESGILEMNVKDLRPRARTILKWNELNVGDVVMVNYNVENPGKRGFWYDAEITTLKTISRTKKEVRVKVFLGGSEGTLNDCRVMSVDEIFKIEKPGAHPISFADGKFLRKNDPECDLCGGDPDKTCHMCSCHKCGEKRDPNMQLLCDECNMAYHIYCLSPPLDKVPEEEYWYCPSCKTDSSEVVKAGERLKLSKKKAKMPSASTESRRDWGRGMACVGRTKECTIVPSNHYGPIPGIPVGSTWRFRVQVSEAGVHRPHVGGIHGRSNDGAYSLVLAGGFEDEVDRGDEFTYTGSGGKNLAGNKRIGAPSADQTLTNMNRALALNCDAPLDDKIGAESRNWRAGKPVRVIRSFKGRKISKYAPEEGNRYDGIYKVVKYWPEISSSHGFLVWRYLLRRDDVEPAPWTSEGIERSRRLCLRLQYPAGYPSEKEGKKTKGQSKKQGSEATKRPASDDECPGDSKVLKASDSTDAVEAFQLTPQQQRLIREDCQNQKLWDEVLASLVEGPNFLKKLEQSFMCVCCQELVYQPVTTECFHNVCKDCLQRSFKAQVFSCPACRHDLGQNYVMVLNETLQTLLDLFFPGYSKGR.

Positions 1 to 78 constitute a Ubiquitin-like domain; the sequence is MWIQVRTIDG…IQLLVRPDSS (78 aa). 4 stretches are compositionally biased toward polar residues: residues 79–96, 106–115, 167–181, and 189–200; these read LPST…SSHN, GGSSSQPSTS, KNGS…NVNH, and KLDNVPSTSNSD. 2 disordered regions span residues 79 to 115 and 154 to 200; these read LPST…PSTS and RASD…SNSD. The interval 118–312 is required for interaction with histone H3; that stretch reads TCLIDPGFGL…VDEIFKIEKP (195 aa). Residues 195–289 form an interaction with PCNP region; sequence STSNSDSVAA…KEVRVKVFLG (95 aa). The segment at 340 to 396 adopts a PHD-type zinc-finger fold; that stretch reads DKTCHMCSCHKCGEKRDPNMQLLCDECNMAYHIYCLSPPLDKVPEEEYWYCPSCKTD. The interval 415–645 is methyl-CpG binding and interaction with HDAC1; it reads KMPSASTESR…LQYPAGYPSE (231 aa). The region spanning 449 to 613 is the YDG domain; that stretch reads GPIPGIPVGS…FLVWRYLLRR (165 aa). Residues 643-676 form a disordered region; sequence PSEKEGKKTKGQSKKQGSEATKRPASDDECPGDS. Residues 658–668 show a composition bias toward basic and acidic residues; the sequence is QGSEATKRPAS. Phosphoserine is present on S668. The segment at 734–773 adopts an RING-type zinc-finger fold; that stretch reads CVCCQELVYQPVTTECFHNVCKDCLQRSFKAQVFSCPACR.

In terms of assembly, homodimer; disulfide-linked. Binds methylated CpG containing oligonucleotides. Interacts with H3; the interaction has a preference for the 'Lys-9' trimethylated form of H3 (H3K9me3). Interacts with PCNP. Interacts with HDAC1. Interacts directly with CCNE1; the interaction ubiquitinates CCNE1 and appears independent of CCNE1 phosphorylation. Interacts with CCND1; the interaction ubiquitinates CCND1 and appears independent of CCND1 phosphorylation. Interacts with p53/TP53 and RB1. Interacts with UBE2I. Interacts with ZNF618. Interacts with UHRF1. Interacts with FANCD2. Interacts with ATR. Interacts with PCNA. May be autoubiquitinated; which may lead to proteasomal degradation. Post-translationally, phosphorylated. Phosphorylation may be mediated by CDK2. In terms of processing, autosumoylated. In terms of tissue distribution, mostly detected in several tissues, including the thymus, spleen, lung, adrenal gland, and ovary. In addition, found in several tissues in the brain (cerebellum, hippocampus, and cerebral cortex).

It is found in the nucleus. It localises to the chromosome. It carries out the reaction S-ubiquitinyl-[E2 ubiquitin-conjugating enzyme]-L-cysteine + [acceptor protein]-L-lysine = [E2 ubiquitin-conjugating enzyme]-L-cysteine + N(6)-ubiquitinyl-[acceptor protein]-L-lysine.. It participates in protein modification; protein ubiquitination. Its activity is regulated as follows. E3 ligase activity is robustly activated by 5-hydroxy-methylcytosine. Functionally, E3 ubiquitin ligase that plays important roles in DNA methylation, histone modifications, cell cycle and DNA repair. Acts as a specific reader for 5-hydroxymethylcytosine (5hmC) and thereby recruits various substrates to these sites to ubiquitinate them. This activity also allows the maintenance of 5mC levels at specific genomic loci and regulates neuron-related gene expression. Participates in cell cycle regulation by ubiquitinating cyclins CCND1 and CCNE1 and thus inducing G1 arrest. Also ubiquitinates PCNP leading to its degradation by the proteasome. Plays an active role in DNA damage repair by ubiquitinating p21/CDKN1A leading to its proteasomal degradation. Also promotes DNA repair by acting as an interstrand cross-links (ICLs) sensor. Mechanistically, cooperates with UHRF1 to ensure recruitment of FANCD2 to ICLs, leading to FANCD2 monoubiquitination and subsequent activation. Contributes to UV-induced DNA damage response by physically interacting with ATR in response to irradiation, thereby promoting ATR activation. The chain is E3 ubiquitin-protein ligase UHRF2 (Uhrf2) from Mus musculus (Mouse).